The primary structure comprises 477 residues: Ribulose bisphosphate carboxylase large chain (477 aa).

A propeptide spanning residues Met-1–Ser-2 is cleaved from the precursor. Pro-3 bears the N-acetylproline mark. The residue at position 14 (Lys-14) is an N6,N6,N6-trimethyllysine. 2 residues coordinate substrate: Asn-123 and Thr-173. Lys-175 serves as the catalytic Proton acceptor. Lys-177 lines the substrate pocket. Positions 201, 203, and 204 each coordinate Mg(2+). An N6-carboxylysine modification is found at Lys-201. His-294 acts as the Proton acceptor in catalysis. Residues Arg-295, His-327, and Ser-379 each coordinate substrate.

It belongs to the RuBisCO large chain family. Type I subfamily. Heterohexadecamer of 8 large chains and 8 small chains; disulfide-linked. The disulfide link is formed within the large subunit homodimers. Mg(2+) serves as cofactor. The disulfide bond which can form in the large chain dimeric partners within the hexadecamer appears to be associated with oxidative stress and protein turnover.

It is found in the plastid. The protein localises to the chloroplast. It carries out the reaction 2 (2R)-3-phosphoglycerate + 2 H(+) = D-ribulose 1,5-bisphosphate + CO2 + H2O. The enzyme catalyses D-ribulose 1,5-bisphosphate + O2 = 2-phosphoglycolate + (2R)-3-phosphoglycerate + 2 H(+). Its function is as follows. RuBisCO catalyzes two reactions: the carboxylation of D-ribulose 1,5-bisphosphate, the primary event in carbon dioxide fixation, as well as the oxidative fragmentation of the pentose substrate in the photorespiration process. Both reactions occur simultaneously and in competition at the same active site. This Manihot esculenta (Cassava) protein is Ribulose bisphosphate carboxylase large chain.